The chain runs to 189 residues: Probable nicotinate-nucleotide adenylyltransferase (189 aa).

This sequence belongs to the NadD family.

The catalysed reaction is nicotinate beta-D-ribonucleotide + ATP + H(+) = deamido-NAD(+) + diphosphate. The protein operates within cofactor biosynthesis; NAD(+) biosynthesis; deamido-NAD(+) from nicotinate D-ribonucleotide: step 1/1. Functionally, catalyzes the reversible adenylation of nicotinate mononucleotide (NaMN) to nicotinic acid adenine dinucleotide (NaAD). This chain is Probable nicotinate-nucleotide adenylyltransferase, found in Bacillus mycoides (strain KBAB4) (Bacillus weihenstephanensis).